The primary structure comprises 993 residues: MATSSFNINELVASHGDKGLLATALVDKTTHEQLEEQLQHQRRGRKVYIRNVLGVKDSEVIRNRYGGKYDLHLTQQEFASQGLAGALRLCGTLDCLDSFPSSGLRQDLVLDFGGSWVTHYLRGHNVHCCSPCLGIRDKMRHSERLMNMRKIILNDPQQFDGRQPDFCTQPAADCKVQAHFAISIHGGYDMGFRGLCEAMNAHGTTILKGTMMFDGAMMFDDQGVIPELNCQWRKIRSAFSETEDVTPLVGKLNSTVFSRVRKFKTMVAFDFINESTMSYVHDWENIKSFLTDQTYSYRGMTYGIERCVIHAGIMTYKIIGVPGMCPPELIRHCIWFPSIKDYVGLKIPASQDLVEWKTVRILTSTLRETEEIAMRCYNDKKAWMEQFKVILGVLSAKSSTIVINGMSMQSGERIDINDYHYIGFAILLHTKMKYEQLGKMYDMWNASSISKWFAALTRPLRVFFSSVVHALFPTLRPREEKEFLIKLSTFVTFNEECSFDGGEEWDVISSAAYVATQAVTDGKILAAQKAEKLAEKLAQPVSEVSDSPETSSQTPDDTADVCGKEREVSELDSLSAQTRSPITRVAERATAMLEYAAYEKHLHDTTVSNLKRIWNMAGGDDKRSFLEGNLKFVFDSYFTVDPMVNIHFSTGRWVRPVPEGIVYPVGYNERGLGPKSDGELYIVNSECVICNSESLSTVYGRSLQTPTGTISQVDGVAGCGKTMPIKSIFEPSTDMIVTANKKSAQDVRMALFKSSDSKEACTFVRTADSVLLNECPTVSRVLEDEVVLLHFGQLCAVMSKLKAVRAICFGDAEQIAFSSRDASFDMRFSKIIPDETSDADTTFRSPQDVVPLVRLMATKALPKGTHSKYTKWVSQSKVRRSVTSRAIASVTLVDLDSSRFYITMTQADKASLISRAKEMNLPKTFWNERIKTVHESQGISEDHVTLVRLKSTKCDLFKQFSYCLVALTRHKVTFRYEYCGVLNGDLIASVARA.

A methyltransferase region spans residues 51–409; it reads NVLGVKDSEV…TIVINGMSMQ (359 aa). The Alphavirus-like MT domain occupies 72-290; sequence HLTQQEFASQ…HDWENIKSFL (219 aa). The interval 538 to 561 is disordered; the sequence is AQPVSEVSDSPETSSQTPDDTADV. A compositionally biased stretch (polar residues) spans 542-556; sequence SEVSDSPETSSQTPD. A (+)RNA virus helicase ATP-binding domain is found at 683–839; it reads VNSECVICNS…KIIPDETSDA (157 aa). The interval 713–976 is ATP-dependent helicase; the sequence is VDGVAGCGKT…LTRHKVTFRY (264 aa). 715 to 722 is a binding site for ATP; the sequence is GVAGCGKT. One can recognise a (+)RNA virus helicase C-terminal domain in the interval 840-993; it reads DTTFRSPQDV…GDLIASVARA (154 aa).

The protein belongs to the bromoviridae replication protein 1a family. In terms of assembly, interacts with RNA-directed RNA polymerase 2a. Interacts with Arabidopsis TIP1-1, TIP1-2, TIP1-3, TIP2-1, TIP2-2 and TIP2-3.

It localises to the host endoplasmic reticulum membrane. Its function is as follows. Involved in the virus replication. Contains a helicase domain and a methyltransferase domain. The methyltransferase domain is probably involved in viral RNA capping. Involved in the formation of ER membrane spherular invaginations in which RNA replication complexes form. The protein is Replication protein 1a of Cucumis sativus (Cucumber).